We begin with the raw amino-acid sequence, 28 residues long: Odorant-binding protein 1 (28 aa).

It belongs to the calycin superfamily. Lipocalin family. In terms of tissue distribution, nasal mucosa.

The protein localises to the secreted. It localises to the extracellular space. In terms of biological role, this soluble protein may play a specific role in odor discrimination and perception. The polypeptide is Odorant-binding protein 1 (Hystrix cristata (North African crested porcupine)).